The primary structure comprises 114 residues: UPF0342 protein OEOE_0901 (114 aa).

The protein belongs to the UPF0342 family.

In Oenococcus oeni (strain ATCC BAA-331 / PSU-1), this protein is UPF0342 protein OEOE_0901.